We begin with the raw amino-acid sequence, 316 residues long: Mitochondrial GTPase 1 (316 aa).

Positions 28–203 constitute a CP-type G domain; sequence MKQMQQKLKQ…LLDTPGILKP (176 aa). GTP-binding positions include 73-76, 147-152, and Gly199; these read NKKD and NVGKSS.

It belongs to the TRAFAC class YlqF/YawG GTPase family. MTG1 subfamily.

The protein localises to the mitochondrion inner membrane. Its function is as follows. Plays a role in the regulation of the mitochondrial ribosome assembly and of translational activity. Displays mitochondrial GTPase activity. The chain is Mitochondrial GTPase 1 from Aedes aegypti (Yellowfever mosquito).